Here is a 199-residue protein sequence, read N- to C-terminus: Probable GTP-binding protein EngB (199 aa).

The region spanning 22–196 (NWPEFAFSGR…GKFILDLVDS (175 aa)) is the EngB-type G domain. Residues 30 to 37 (GRSNVGKS), 57 to 61 (GRTQS), 75 to 78 (DLPG), 142 to 145 (TKVD), and 175 to 177 (FSA) each bind GTP. Mg(2+) is bound by residues Ser37 and Thr59.

Belongs to the TRAFAC class TrmE-Era-EngA-EngB-Septin-like GTPase superfamily. EngB GTPase family. The cofactor is Mg(2+).

Functionally, necessary for normal cell division and for the maintenance of normal septation. The chain is Probable GTP-binding protein EngB from Halothermothrix orenii (strain H 168 / OCM 544 / DSM 9562).